The primary structure comprises 307 residues: Golgi to ER traffic protein 2 (307 aa).

Residues 1-173 lie on the Cytoplasmic side of the membrane; the sequence is MSDSTDSPAV…QAYDTYQQKL (173 aa). The span at 41–52 shows a compositional bias: polar residues; that stretch reads LSQGSSVKTTGV. Residues 41 to 73 are disordered; that stretch reads LSQGSSVKTTGVKSVLDEPQPTATSSAIHDEDP. Residues 174 to 194 traverse the membrane as a helical segment; the sequence is WKSRFLVIRVVVTLFNFFYHY. The Lumenal segment spans residues 195-220; the sequence is LNVPSFHASNYSYVRDLAQDEFPVRN. A helical membrane pass occupies residues 221-240; it reads FFTWFAAFEVIIVLQYYTVF. At 241-284 the chain is on the cytoplasmic side; that stretch reads HKLGLFHAANQNSMIMKLMSMGSMVLPQLNTYQPLVARFLGYYE. Residues 285-305 traverse the membrane as a helical segment; that stretch reads LFGIIFGDLSLVIVLFGLLSF. Topologically, residues 306–307 are lumenal; sequence TK.

Belongs to the GET2 family. In terms of assembly, component of the Golgi to ER traffic (GET) complex, which is composed of GET1, GET2 and GET3. Within the complex, GET1 and GET2 form a heterotetramer which is stabilized by phosphatidylinositol binding and which binds to the GET3 homodimer.

It is found in the endoplasmic reticulum membrane. The protein localises to the golgi apparatus membrane. In terms of biological role, required for the post-translational delivery of tail-anchored (TA) proteins to the endoplasmic reticulum. Together with GET1, acts as a membrane receptor for soluble GET3, which recognizes and selectively binds the transmembrane domain of TA proteins in the cytosol. The GET complex cooperates with the HDEL receptor ERD2 to mediate the ATP-dependent retrieval of resident ER proteins that contain a C-terminal H-D-E-L retention signal from the Golgi to the ER. The sequence is that of Golgi to ER traffic protein 2 from Candida tropicalis (strain ATCC MYA-3404 / T1) (Yeast).